A 369-amino-acid polypeptide reads, in one-letter code: Chaperone protein DnaJ (369 aa).

The J domain occupies aspartate 5–glycine 70. The segment at glycine 128 to glutamine 206 adopts a CR-type zinc-finger fold. Positions 141, 144, 158, 161, 180, 183, 194, and 197 each coordinate Zn(2+). CXXCXGXG motif repeat units follow at residues cysteine 141–glycine 148, cysteine 158–glycine 165, cysteine 180–glycine 187, and cysteine 194–glycine 201.

This sequence belongs to the DnaJ family. As to quaternary structure, homodimer. The cofactor is Zn(2+).

The protein resides in the cytoplasm. In terms of biological role, participates actively in the response to hyperosmotic and heat shock by preventing the aggregation of stress-denatured proteins and by disaggregating proteins, also in an autonomous, DnaK-independent fashion. Unfolded proteins bind initially to DnaJ; upon interaction with the DnaJ-bound protein, DnaK hydrolyzes its bound ATP, resulting in the formation of a stable complex. GrpE releases ADP from DnaK; ATP binding to DnaK triggers the release of the substrate protein, thus completing the reaction cycle. Several rounds of ATP-dependent interactions between DnaJ, DnaK and GrpE are required for fully efficient folding. Also involved, together with DnaK and GrpE, in the DNA replication of plasmids through activation of initiation proteins. The polypeptide is Chaperone protein DnaJ (Nitrosomonas europaea (strain ATCC 19718 / CIP 103999 / KCTC 2705 / NBRC 14298)).